We begin with the raw amino-acid sequence, 244 residues long: MRIKFLVVLAVICLFAHYASASGMGGDKKPKDAPKPKDAPKPKEVKPVKAESSEYEIEVIKHQKEKTEKKEKEKKTHVETKKEVKKKEKKQIPCSEKLKDEKLDCETKGVPAGYKAIFKFTENEECDWTCDYEALPPPPGAKKDDKKEKKTVKVVKPPKEKPPKKLRKECSGEKVIKFQNCLVKIRGLIAFGDKTKNFDKKFAKLVQGKQKKGAKKAKGGKKAAPKPGPKPGPKQADKPKDAKK.

A signal peptide spans methionine 1–alanine 21. 3 disordered regions span residues glycine 23 to glutamine 91, proline 137 to glutamate 169, and valine 206 to lysine 244. 2 stretches are compositionally biased toward basic and acidic residues: residues glycine 26–lysine 86 and proline 157–glutamate 169. 2 consecutive repeat copies span residues lysine 29–proline 34 and lysine 35–proline 40. The tract at residues lysine 29 to proline 47 is 3 X 6 AA approximate tandem repeats of K-P-K-D-A-P. The stretch at lysine 41–proline 47 is one 1-3; approximate repeat. 2 repeat units span residues lysine 156–lysine 159 and lysine 161–lysine 164. The tract at residues lysine 156 to lysine 168 is 3 X 4 AA approximate tandem repeats of K-P-P-K. The stretch at lysine 165 to lysine 168 is one 2-3; approximate repeat. Over residues lysine 209–alanine 224 the composition is skewed to basic residues. Tandem repeats lie at residues proline 225–glycine 228, proline 229–glycine 232, and proline 233–alanine 236. Residues proline 225–lysine 240 are 4 X 4 AA approximate tandem repeats of P-K-[PQ]-[GA]. The segment covering glutamine 235 to lysine 244 has biased composition (basic and acidic residues). Residues aspartate 237–lysine 240 form a 3-4; approximate repeat.

In terms of tissue distribution, salivary gland.

The protein localises to the secreted. Functionally, used by the larvae to construct a supramolecular structure, the larval tube. The polypeptide is Salivary gland SP38-40.A protein (SP38-40.A) (Chironomus tentans (Midge)).